A 337-amino-acid polypeptide reads, in one-letter code: Large ribosomal subunit protein uL3 (337 aa).

Residues 1–26 (MGHAHAPRRGSLGYSPRVRARSQKPK) form a disordered region.

It belongs to the universal ribosomal protein uL3 family. As to quaternary structure, part of the 50S ribosomal subunit. Forms a cluster with proteins L14 and L24e.

In terms of biological role, one of the primary rRNA binding proteins, it binds directly near the 3'-end of the 23S rRNA, where it nucleates assembly of the 50S subunit. The protein is Large ribosomal subunit protein uL3 of Methanocella arvoryzae (strain DSM 22066 / NBRC 105507 / MRE50).